The following is a 524-amino-acid chain: Cytochrome c nitrite reductase subunit NrfA (524 aa).

The signal sequence occupies residues 1–24 (MNNQKTFKGLRLAALGLVAVAAFT). Residues 29-39 (DVSTELKTPVY) form an interaction with NrfH region. Residues Gly-78, Glu-117, and Ala-118 each coordinate Ca(2+). His-121, Cys-147, Cys-150, Lys-151, Cys-187, Cys-190, and His-191 together coordinate heme. Positions 221–222 (RN) are interaction with NrfH. Heme is bound by residues Cys-229, Cys-232, and His-233. Positions 235, 236, 295, and 297 each coordinate Ca(2+). Positions 309, 316, 319, 320, 335, 349, 352, 353, and 434 each coordinate heme. The interval 318 to 331 (DCHMSYTRSDDKKK) is interaction with NrfH. An interaction with NrfH region spans residues 351-355 (QCHSD).

The protein belongs to the cytochrome c-552 family. Component of the NrfHA cytochrome c nitrite reductase complex composed of 4 NrfA catalytic subunits and 2 NrfH quinone-binding subunits. NrfA homodimer interacts with NrfH. Requires Ca(2+) as cofactor. Heme serves as cofactor.

It is found in the cell inner membrane. It carries out the reaction 6 Fe(III)-[cytochrome c] + NH4(+) + 2 H2O = 6 Fe(II)-[cytochrome c] + nitrite + 8 H(+). Functionally, catalytic subunit of the cytochrome c nitrite reductase holocomplex NrfHA. Has both nitrite and sulfite reductase activities. Catalyzes the reduction of nitrite to ammonia, consuming six electrons acquired by the electron donor subunit NrfH from the menaquinone pool, in an anaerobic respiratory process of nitrite. The other biological function of the NrfHA holocomplex is to detoxify nitrite. This function is essential for the survival of this organism as it enables it to overcome inhibition by nitrite, which is produced by other organisms living in the same environment. The protein is Cytochrome c nitrite reductase subunit NrfA of Nitratidesulfovibrio vulgaris (strain ATCC 29579 / DSM 644 / CCUG 34227 / NCIMB 8303 / VKM B-1760 / Hildenborough) (Desulfovibrio vulgaris).